A 679-amino-acid chain; its full sequence is Stress-70 protein, mitochondrial (679 aa).

A mitochondrion-targeting transit peptide spans 1-46 (MISASRAAAARLVGAAASRGPTAARHQDSWNGLSHEAFRLVSRRDY). An interaction with NFS1 region spans residues 1-432 (MISASRAAAA…IQGGVLAGDV (432 aa)). ADP contacts are provided by T63 and N64. The segment at 63-431 (TNSCVAVMEG…AIQGGVLAGD (369 aa)) is nucleotide-binding domain (NBD). Position 76 is an N6-acetyllysine (K76). Phosphothreonine is present on T87. N6-acetyllysine; alternate is present on residues K135 and K138. K135 and K138 each carry N6-succinyllysine; alternate. Position 143 is an N6-acetyllysine (K143). N6-acetyllysine; alternate is present on K206. An N6-succinyllysine; alternate modification is found at K206. The residue at position 206 (K206) is an N6-malonyllysine; alternate. Residues K234 and K288 each carry the N6-acetyllysine modification. Position 300 is an N6-acetyllysine; alternate (K300). K300 is subject to N6-succinyllysine; alternate. E313, K316, and S320 together coordinate ADP. K368 carries the N6-succinyllysine modification. The ADP site is built by G388 and R391. At K394 the chain carries N6-succinyllysine. S408 is modified (phosphoserine). Residues 432 to 441 (VTDVLLLDVT) form an interdomain linker region. Residues 432-679 (VTDVLLLDVT…QKEDQKEEKQ (248 aa)) are interaction with FXN and ISCU. The segment at 442-679 (PLSLGIETLG…QKEDQKEEKQ (238 aa)) is substrate-binding domain (SBD). Omega-N-methylarginine is present on R513. N6-acetyllysine; alternate is present on residues K567 and K600. 2 positions are modified to N6-succinyllysine; alternate: K567 and K600. The residue at position 610 (K610) is an N6-succinyllysine. The residue at position 612 (K612) is an N6-acetyllysine. K646 is subject to N6-acetyllysine; alternate. K646 is modified (N6-succinyllysine; alternate). The disordered stretch occupies residues 656–679 (ASEREGSGSSGTGEQKEDQKEEKQ). Residues 669–679 (EQKEDQKEEKQ) show a composition bias toward basic and acidic residues.

Belongs to the heat shock protein 70 family. Interacts strongly with the intermediate form of FXN and weakly with its mature form. Interacts with HSCB. Associates with the mitochondrial contact site and cristae organizing system (MICOS) complex, composed of at least MICOS10/MIC10, CHCHD3/MIC19, CHCHD6/MIC25, APOOL/MIC27, IMMT/MIC60, APOO/MIC23/MIC26 and QIL1/MIC13. This complex was also known under the names MINOS or MitOS complex. The MICOS complex associates with mitochondrial outer membrane proteins SAMM50, MTX1, MTX2 and DNAJC11, mitochondrial inner membrane protein TMEM11 and with HSPA9. Interacts with DNLZ, the interaction is required to prevent self-aggregation. Interacts with TESPA1. Interacts with PDPN. Interacts with NFU1, NFS1 and ISCU. Interacts with TP53; the interaction promotes TP53 degradation. Interacts (via SBD domain) with UBXN2A; the interaction with UBXN2A inhibits HSPA9 interaction with and degradation of TP53, thereby promotes TP53 translocation to the nucleus. Interacts with ITPR1 AND VDAC1; this interaction couples ITPR1 to VDAC1. Component of the TIM23 mitochondrial inner membrane pre-sequence translocase complex.

It localises to the mitochondrion. Its subcellular location is the nucleus. The protein localises to the nucleolus. It is found in the cytoplasm. The protein resides in the mitochondrion matrix. It carries out the reaction ATP + H2O = ADP + phosphate + H(+). The chaperone activity is regulated by ATP-induced allosteric coupling of the nucleotide-binding (NBD) and substrate-binding (SBD) domains. ATP binding in the NBD leads to a conformational change in the NBD, which is transferred through the interdomain linker (IDL) to the substrate-binding domain (SBD). This elicits a reduced substrate affinity and a faster substrate exchange rate. Upon hydrolysis of ATP to ADP, the protein undergoes a conformational change that increases its affinity for substrate proteins. It cycles through repeated phases of ATP hydrolysis and nucleotide exchange, facilitating repeated cycles of substrate binding and release. Functions in collaboration with co-chaperones. Functions with the co-chaperone, DNLZ, to maintain solubility and regulate ATP hydrolysis. Nucleotide exchange factors, GRPEL1 and GRPEL2, accelerate nucleotide exchange. Functionally, mitochondrial chaperone that plays a key role in mitochondrial protein import, folding, and assembly. Plays an essential role in the protein quality control system, the correct folding of proteins, the re-folding of misfolded proteins, and the targeting of proteins for subsequent degradation. These processes are achieved through cycles of ATP binding, ATP hydrolysis, and ADP release, mediated by co-chaperones. In mitochondria, it associates with the TIM (translocase of the inner membrane) protein complex to assist in the import and folding of mitochondrial proteins. Plays an important role in mitochondrial iron-sulfur cluster (ISC) biogenesis, interacts with and stabilizes ISC cluster assembly proteins FXN, NFU1, NFS1 and ISCU. Regulates erythropoiesis via stabilization of ISC assembly. Regulates mitochondrial calcium-dependent apoptosis by coupling two calcium channels, ITPR1 and VDAC1, at the mitochondria-associated endoplasmic reticulum (ER) membrane to facilitate calcium transport from the ER lumen to the mitochondria intermembrane space, providing calcium for the downstream calcium channel MCU, which releases it into the mitochondrial matrix. Although primarily located in the mitochondria, it is also found in other cellular compartments. In the cytosol, it associates with proteins involved in signaling, apoptosis, or senescence. It may play a role in cell cycle regulation via its interaction with and promotion of degradation of TP53. May play a role in the control of cell proliferation and cellular aging. Protects against reactive oxygen species (ROS). Extracellular HSPA9 plays a cytoprotective role by preventing cell lysis following immune attack by the membrane attack complex by disrupting formation of the complex. This chain is Stress-70 protein, mitochondrial, found in Homo sapiens (Human).